Reading from the N-terminus, the 471-residue chain is Threonine--tRNA ligase catalytic subunit (471 aa).

The segment at 8–333 (THIDYAYELD…YLEHRRGRMP (326 aa)) is catalytic. Positions 112, 166, and 310 each coordinate Zn(2+).

It belongs to the class-II aminoacyl-tRNA synthetase family. As to quaternary structure, homodimer. Probably interacts with its editing subunit. Zn(2+) is required as a cofactor.

It is found in the cytoplasm. It carries out the reaction tRNA(Thr) + L-threonine + ATP = L-threonyl-tRNA(Thr) + AMP + diphosphate + H(+). In terms of biological role, catalyzes the attachment of threonine to tRNA(Thr) in a two-step reaction: L-threonine is first activated by ATP to form Thr-AMP and then transferred to the acceptor end of tRNA(Thr). This protein is probably not able to deacylate mischarged L-seryl-tRNA(Thr) as it lacks the appropriate domain. In Aeropyrum pernix (strain ATCC 700893 / DSM 11879 / JCM 9820 / NBRC 100138 / K1), this protein is Threonine--tRNA ligase catalytic subunit.